We begin with the raw amino-acid sequence, 151 residues long: 3-hydroxyacyl-[acyl-carrier-protein] dehydratase FabZ (151 aa).

Residue H54 is part of the active site.

This sequence belongs to the thioester dehydratase family. FabZ subfamily.

It localises to the cytoplasm. It carries out the reaction a (3R)-hydroxyacyl-[ACP] = a (2E)-enoyl-[ACP] + H2O. Functionally, involved in unsaturated fatty acids biosynthesis. Catalyzes the dehydration of short chain beta-hydroxyacyl-ACPs and long chain saturated and unsaturated beta-hydroxyacyl-ACPs. The polypeptide is 3-hydroxyacyl-[acyl-carrier-protein] dehydratase FabZ (Blochmanniella pennsylvanica (strain BPEN)).